We begin with the raw amino-acid sequence, 146 residues long: Putative inactive cytochrome P450 2G1 (146 aa).

C91 serves as a coordination point for heme.

It belongs to the cytochrome P450 family. Heme is required as a cofactor.

The polypeptide is Putative inactive cytochrome P450 2G1 (CYP2G1P) (Homo sapiens (Human)).